The primary structure comprises 348 residues: Malyl-CoA/beta-methylmalyl-CoA/citramalyl-CoA lyase (348 aa).

Residues 32–33 (HF), lysine 40, and arginine 92 contribute to the substrate site. Mg(2+)-binding residues include glutamate 157 and aspartate 184. Residues 183–184 (AD) and leucine 274 each bind substrate.

The protein belongs to the HpcH/HpaI aldolase family. Homohexamer. Dimer of trimers. Mg(2+) serves as cofactor. The cofactor is Mn(2+).

It carries out the reaction (S)-malyl-CoA = glyoxylate + acetyl-CoA. The enzyme catalyses (2R,3S)-beta-methylmalyl-CoA = propanoyl-CoA + glyoxylate. The catalysed reaction is (3S)-citramalyl-CoA = pyruvate + acetyl-CoA. Its activity is regulated as follows. Inhibited by oxalate. Involved in the 3-hydroxypropionate cycle used for autotrophic carbon dioxide fixation, and in the glyoxylate assimilation cycle used to regenerate acetyl-CoA and produce pyruvate as universal precursor for biosynthesis. As a part of the 3-hydroxypropionate cycle, it catalyzes the cleavage of (S)-malyl-CoA to yield acetyl-CoA and glyoxylate. As part of the glyoxylate assimilation cycle, it catalyzes the condensation of glyoxylate with propionyl-CoA to yield (2R,3S)-beta-methylmalyl-CoA, and catalyzes the cleavage of (S)-citramalyl-CoA to yield acetyl-CoA and pyruvate. The polypeptide is Malyl-CoA/beta-methylmalyl-CoA/citramalyl-CoA lyase (mcl) (Chloroflexus aurantiacus).